A 128-amino-acid chain; its full sequence is Sulfurtransferase TusD (128 aa).

C78 (cysteine persulfide intermediate) is an active-site residue.

Belongs to the DsrE/TusD family. In terms of assembly, heterohexamer, formed by a dimer of trimers. The hexameric TusBCD complex contains 2 copies each of TusB, TusC and TusD. The TusBCD complex interacts with TusE.

The protein resides in the cytoplasm. Its function is as follows. Part of a sulfur-relay system required for 2-thiolation of 5-methylaminomethyl-2-thiouridine (mnm(5)s(2)U) at tRNA wobble positions. Accepts sulfur from TusA and transfers it in turn to TusE. The sequence is that of Sulfurtransferase TusD from Escherichia coli O127:H6 (strain E2348/69 / EPEC).